The primary structure comprises 535 residues: Pescadillo homolog (535 aa).

One can recognise a BRCT domain in the interval Lys-314 to Pro-406.

This sequence belongs to the pescadillo family.

It localises to the nucleus. It is found in the nucleolus. Its subcellular location is the nucleoplasm. Functionally, required for maturation of ribosomal RNAs and formation of the large ribosomal subunit. The sequence is that of Pescadillo homolog from Brugia malayi (Filarial nematode worm).